A 449-amino-acid polypeptide reads, in one-letter code: Maltose-6'-phosphate glucosidase (449 aa).

NAD(+) is bound at residue 6–72 (FSIVIAGGGS…PDIEFAATTD (67 aa)). Residues Arg95 and Asn149 each contribute to the substrate site. Residue Cys171 coordinates Mn(2+). The active-site Proton donor is Asp172. His202 contributes to the Mn(2+) binding site. Tyr265 serves as the catalytic Proton acceptor. Arg285 serves as a coordination point for substrate.

The protein belongs to the glycosyl hydrolase 4 family. In terms of assembly, homotetramer. It depends on Mn(2+) as a cofactor. The cofactor is Fe(2+). Co(2+) serves as cofactor. Requires Ni(2+) as cofactor. NAD(+) is required as a cofactor.

It catalyses the reaction alpha-maltose 6'-phosphate + H2O = D-glucose 6-phosphate + D-glucose. Its activity is regulated as follows. Cellobiose-6'-phosphate and 6-phospho-beta-D-glucopyranoside are not substrates but competitive inhibitors of GlvA. Hydrolyzes maltose-6'-phosphate and trehalose-6'-phosphate. Is involved in the catabolism of alpha-glycosides accumulated via a phosphoenolpyruvate-dependent maltose phosphotransferase system (PEP-PTS). Is also able to significantly catalyze the hydrolysis of both 6-phospho-alpha- and 6-phospho-beta-glucosides containing activated leaving groups such as p-nitrophenol and does so with retention and inversion, respectively, of the substrate anomeric configuration. This is Maltose-6'-phosphate glucosidase (glvA) from Bacillus subtilis (strain 168).